A 272-amino-acid polypeptide reads, in one-letter code: Glutamate racemase (272 aa).

Residues 12 to 13 and 44 to 45 contribute to the substrate site; these read DS and YG. The Proton donor/acceptor role is filled by C75. Position 76-77 (76-77) interacts with substrate; it reads NT. Catalysis depends on C185, which acts as the Proton donor/acceptor. Substrate is bound at residue 186-187; sequence TH.

Belongs to the aspartate/glutamate racemases family.

The catalysed reaction is L-glutamate = D-glutamate. The protein operates within cell wall biogenesis; peptidoglycan biosynthesis. In terms of biological role, provides the (R)-glutamate required for cell wall biosynthesis. The polypeptide is Glutamate racemase (Mycobacterium leprae (strain TN)).